The primary structure comprises 191 residues: Molybdenum cofactor guanylyltransferase (191 aa).

Residues 11–13 (LCG), Lys23, Asp66, and Asp97 contribute to the GTP site. Asp97 lines the Mg(2+) pocket.

It belongs to the MobA family. Monomer. It depends on Mg(2+) as a cofactor.

The protein localises to the cytoplasm. It carries out the reaction Mo-molybdopterin + GTP + H(+) = Mo-molybdopterin guanine dinucleotide + diphosphate. Its function is as follows. Transfers a GMP moiety from GTP to Mo-molybdopterin (Mo-MPT) cofactor (Moco or molybdenum cofactor) to form Mo-molybdopterin guanine dinucleotide (Mo-MGD) cofactor. This Campylobacter jejuni subsp. jejuni serotype O:6 (strain 81116 / NCTC 11828) protein is Molybdenum cofactor guanylyltransferase.